The sequence spans 181 residues: Large ribosomal subunit protein uL5c (181 aa).

This sequence belongs to the universal ribosomal protein uL5 family. Part of the 50S ribosomal subunit; contacts the 5S rRNA.

Its subcellular location is the plastid. It localises to the chloroplast. Its function is as follows. Binds 5S rRNA, forms part of the central protuberance of the 50S subunit. This is Large ribosomal subunit protein uL5c (rpl5) from Guillardia theta (Cryptophyte).